Reading from the N-terminus, the 312-residue chain is DNA-directed RNA polymerase subunit alpha (312 aa).

The tract at residues 1–229 is alpha N-terminal domain (alpha-NTD); the sequence is MLQYQIDRVD…ALFQPLATVT (229 aa). The tract at residues 241-312 is alpha C-terminal domain (alpha-CTD); the sequence is SAESQIPLEE…ISLPQSRTTA (72 aa).

It belongs to the RNA polymerase alpha chain family. In terms of assembly, in cyanobacteria the RNAP catalytic core is composed of 2 alpha, 1 beta, 1 beta', 1 gamma and 1 omega subunit. When a sigma factor is associated with the core the holoenzyme is formed, which can initiate transcription.

The catalysed reaction is RNA(n) + a ribonucleoside 5'-triphosphate = RNA(n+1) + diphosphate. In terms of biological role, DNA-dependent RNA polymerase catalyzes the transcription of DNA into RNA using the four ribonucleoside triphosphates as substrates. In Synechococcus sp. (strain RCC307), this protein is DNA-directed RNA polymerase subunit alpha.